A 555-amino-acid chain; its full sequence is Tau-cadinol synthase (555 aa).

Residues Arg-270, Asp-307, Asp-311, Arg-448, and Asp-451 each contribute to the (2E,6E)-farnesyl diphosphate site. Mg(2+)-binding residues include Asp-307 and Asp-311. The DDXXD motif motif lies at 307–311 (DDTYD). Residues Asp-451, Ser-455, and Glu-459 each contribute to the Mg(2+) site.

This sequence belongs to the terpene synthase family. It depends on Mg(2+) as a cofactor.

It carries out the reaction (2E,6E)-farnesyl diphosphate + H2O = tau-cadinol + diphosphate. The catalysed reaction is (2E,6E)-farnesyl diphosphate = (+)-gamma-cadinene + diphosphate. It participates in secondary metabolite biosynthesis; terpenoid biosynthesis. Its function is as follows. Sesquiterpene synthase that catalyzes the formation of sesquiterpenes and sesquiterpenoid alcohols. Converts farnesyl diphosphate (FPP) to tau-cadinol. Converts FPP to gamma-cadinene. Tau-cadinol is the major product. The chain is Tau-cadinol synthase from Lavandula angustifolia (Lavender).